A 552-amino-acid chain; its full sequence is Histone deacetylase 15 (552 aa).

The segment at 86 to 115 (EFVKWCCVNCTMSNPGDMVHCCICGEHKES) adopts a RanBP2-type zinc-finger fold. The histone deacetylase stretch occupies residues 149–462 (STAVGFDERM…ATAVIKVLLG (314 aa)). His-277 acts as the Proton donor/acceptor in catalysis. Positions 313, 315, and 404 each coordinate Zn(2+).

This sequence belongs to the histone deacetylase family. HD type 2 subfamily. As to quaternary structure, interacts with PIF3 in the dark. Interacts with HY5. Interacts with MYB96. Forms homotetramers. The cofactor is Zn(2+). Expressed in stems, leaves, flowers, siliques and mature seeds.

It localises to the nucleus. Its subcellular location is the cytoplasm. It catalyses the reaction N(6)-acetyl-L-lysyl-[histone] + H2O = L-lysyl-[histone] + acetate. Inhibited by trichostatin A (TSA), a well-known histone deacetylase inhibitor. Responsible for the deacetylation of lysine residues on the N-terminal part of the core histones (H2A, H2B, H3 and H4). Histone deacetylation gives a tag for epigenetic repression and plays an important role in transcriptional regulation, cell cycle progression and developmental events. Histone deacetylases act via the formation of large multiprotein complexes. Represses chlorophyll biosynthesis and photosynthesis in the dark. Is recruited by PIF3 to the promoters of chlorophyll biosynthetic and photosynthetic genes, and represses their transcription by histone deacetylation. Involved in the repression of hypocotyl cell elongation to promote photomorphogenesis. Is recruited by HY5 to the promoters of a subset of cell wall organization and auxin signaling-related genes, and represses gene expression by decreasing the levels of histone H4 acetylation in a light-dependent manner. Promotes abscisic acid (ABA) signaling. Is recruited by MYB96 to the promoters of a subset of Rho GTPase (ROP) genes, which repress ABA signaling at the early stages of signal transduction. Represses ROP expression by removing acetyl groups of histone H3 and H4 from the cognate regions, particularly in the presence of ABA. Represses the plant response to elevated ambient temperature by directly repressing warm temperature-responsive genes. This is Histone deacetylase 15 from Arabidopsis thaliana (Mouse-ear cress).